The chain runs to 196 residues: Chaperone protein TorD (196 aa).

The protein belongs to the TorD/DmsD family. TorD subfamily.

It localises to the cytoplasm. In terms of biological role, involved in the biogenesis of TorA. Acts on TorA before the insertion of the molybdenum cofactor and, as a result, probably favors a conformation of the apoenzyme that is competent for acquiring the cofactor. This Pasteurella multocida (strain Pm70) protein is Chaperone protein TorD.